The following is a 463-amino-acid chain: MGKEKIHINIVVIGHVDSGKSTTTGHLIYKCGGIDKRTIEKFEKEAQEMGKGSFKYAWVLDKLKAERERGITIDIALWKFETAKYYVTIIDAPGHRDFIKNMITGTSQADCAVLIVAAGTGEFEAGISKNGQTREHALLAFTLGVKQLIVGVNKMDSSEPPYSEARYEEIKKEVSSYIKKIGYNPAAVAFVPISGWHGDNMLEPSTNMPWFKGWKVERKEGNADGKTLIDALDAILPPARPTDKALRLPLQDVYKIGGIGTVPVGRVETGVLKPGTVVVFAPANITTEVKSVEMHHEALQEAVPGDNVGFNVKNVSVKELRRGYVAGDSKANPPKGAADFTAQVIVLNHPGQIANGYTPVLDCHTAHIACKFAEIKEKVDRRSGKTTEENPKFIKSGDAAIVNLVPSKPLCVEAFQEFPPLGRFAVRDMRQTVAVGVIKAVNFKDASGGKVTKAAEKATKGKK.

Positions 5–242 (KIHINIVVIG…DAILPPARPT (238 aa)) constitute a tr-type G domain. Residues 14-21 (GHVDSGKS) are G1. 14–21 (GHVDSGKS) is a GTP binding site. The tract at residues 70–74 (GITID) is G2. The G3 stretch occupies residues 91–94 (DAPG). GTP contacts are provided by residues 91-95 (DAPGH) and 153-156 (NKMD). The tract at residues 153–156 (NKMD) is G4. The tract at residues 194–196 (SGW) is G5. 5-glutamyl glycerylphosphorylethanolamine is present on residues E301 and E374.

Belongs to the TRAFAC class translation factor GTPase superfamily. Classic translation factor GTPase family. EF-Tu/EF-1A subfamily.

It is found in the cytoplasm. Its function is as follows. This protein promotes the GTP-dependent binding of aminoacyl-tRNA to the A-site of ribosomes during protein biosynthesis. In Drosophila melanogaster (Fruit fly), this protein is Elongation factor 1-alpha 1.